The sequence spans 357 residues: 3-isopropylmalate dehydrogenase (357 aa).

77 to 90 (GPKWDTLPGEKRPE) contacts NAD(+). Arg-97, Arg-107, Arg-136, and Asp-224 together coordinate substrate. Mg(2+) is bound by residues Asp-224, Asp-248, and Asp-252. Position 282 to 294 (282 to 294 (GSAPDIAGQDLAN)) interacts with NAD(+).

Belongs to the isocitrate and isopropylmalate dehydrogenases family. LeuB type 1 subfamily. As to quaternary structure, homodimer. Mg(2+) is required as a cofactor. The cofactor is Mn(2+).

It localises to the cytoplasm. It carries out the reaction (2R,3S)-3-isopropylmalate + NAD(+) = 4-methyl-2-oxopentanoate + CO2 + NADH. It participates in amino-acid biosynthesis; L-leucine biosynthesis; L-leucine from 3-methyl-2-oxobutanoate: step 3/4. Catalyzes the oxidation of 3-carboxy-2-hydroxy-4-methylpentanoate (3-isopropylmalate) to 3-carboxy-4-methyl-2-oxopentanoate. The product decarboxylates to 4-methyl-2 oxopentanoate. The sequence is that of 3-isopropylmalate dehydrogenase from Clostridium acetobutylicum (strain ATCC 824 / DSM 792 / JCM 1419 / IAM 19013 / LMG 5710 / NBRC 13948 / NRRL B-527 / VKM B-1787 / 2291 / W).